The chain runs to 212 residues: uncharacterized protein (212 aa).

C52 functions as the Acyl-thioester intermediate in the catalytic mechanism. Residues H89 and D104 contribute to the active site.

It belongs to the arylamine N-acetyltransferase family.

This is an uncharacterized protein from Acanthamoeba polyphaga (Amoeba).